Reading from the N-terminus, the 932-residue chain is Eukaryotic translation initiation factor 3 subunit A (932 aa).

The region spanning 309–492 is the PCI domain; sequence KPATANFVIL…NSISFSSDLF (184 aa). Phosphoserine occurs at positions 374 and 501. Positions 537–862 form a coiled coil; it reads LRKQQAEAAY…DEEISRKLAE (326 aa). Basic and acidic residues predominate over residues 793-865; sequence AEEEAARAAE…ISRKLAEKAA (73 aa). The disordered stretch occupies residues 793 to 932; it reads AEEEAARAAE…PPSRRNQQQQ (140 aa). Ser874, Ser875, and Ser877 each carry phosphoserine. Positions 877 to 893 are enriched in low complexity; sequence SPGAWRRGGASAGGVSR.

The protein belongs to the eIF-3 subunit A family. As to quaternary structure, component of the eukaryotic translation initiation factor 3 (eIF-3) complex. The eIF-3 complex appears to include tif32/eif3a, SPAC25G10.08/eif3b, tif33/eif3c, SPBC4C3.07/eif3f, tif35/eif3g and sum1/eif3i. This set of common subunits may also associate exclusively with either moe1/eif3d and int6/eif3e, or with SPAC821.05/eif3h and SPAC1751.03/eif3m. The eIF-3 complex may also include SPAC3A12.13c/eif3j.

The protein resides in the cytoplasm. Its function is as follows. RNA-binding component of the eukaryotic translation initiation factor 3 (eIF-3) complex, which is involved in protein synthesis of a specialized repertoire of mRNAs and, together with other initiation factors, stimulates binding of mRNA and methionyl-tRNAi to the 40S ribosome. The eIF-3 complex specifically targets and initiates translation of a subset of mRNAs involved in cell proliferation. The chain is Eukaryotic translation initiation factor 3 subunit A (tif32) from Schizosaccharomyces pombe (strain 972 / ATCC 24843) (Fission yeast).